Here is a 512-residue protein sequence, read N- to C-terminus: MATANGAVENGQPDRKPPALPRPIRNLEVKFTKIFINNEWHESKSGKKFATCNPSTREQICEVEEGDKPDVDKAVEAAQVAFQRGSPWRRLDALSRGRLLHQLADLVERDRATLAALETMDTGKPFLHAFFIDLEGCIRTLRYFAGWADKIQGKTIPTDDNVVCFTRHEPIGVCGAITPWNFPLLMLVWKLAPALCCGNTMVLKPAEQTPLTALYLGSLIKEAGFPPGVVNIVPGFGPTVGAAISSHPQINKIAFTGSTEVGKLVKEAASRSNLKRVTLELGGKNPCIVCADADLDLAVECAHQGVFFNQGQCCTAASRVFVEEQVYSEFVRRSVEYAKKRPVGDPFDVKTEQGPQIDQKQFDKILELIESGKKEGAKLECGGSAMEDKGLFIKPTVFSEVTDNMRIAKEEIFGPVQPILKFKSIEEVIKRANSTDYGLTAAVFTKNLDKALKLASALESGTVWINCYNALYAQAPFGGFKMSGNGRELGEYALAEYTEVKTVTIKLGDKNP.

The disordered stretch occupies residues 1–22 (MATANGAVENGQPDRKPPALPR). A2 is subject to N-acetylalanine. Residues K204, E207, and 257–262 (GSTEVG) each bind NAD(+). The active-site Proton acceptor is E280. C314 functions as the Nucleophile in the catalytic mechanism. Residues Q361 and E411 each contribute to the NAD(+) site.

Belongs to the aldehyde dehydrogenase family. As to quaternary structure, homotetramer. In terms of tissue distribution, expressed at low levels in many tissues and at higher levels in salivary gland, stomach, and kidney.

It is found in the cytoplasm. It catalyses the reaction all-trans-retinal + NAD(+) + H2O = all-trans-retinoate + NADH + 2 H(+). The catalysed reaction is retinal + NAD(+) + H2O = retinoate + NADH + 2 H(+). The enzyme catalyses all-trans-13,14-dihydroretinal + NAD(+) + H2O = all-trans-13,14-dihydroretinoate + NADH + 2 H(+). The protein operates within cofactor metabolism; retinol metabolism. Functionally, catalyzes the NAD-dependent oxidation of aldehyde substrates, such as all-trans-retinal and all-trans-13,14-dihydroretinal, to their corresponding carboxylic acids, all-trans-retinoate and all-trans-13,14-dihydroretinoate, respectively. High specificity for all-trans-retinal as substrate, can also accept acetaldehyde as substrate in vitro but with lower affinity. Required for the biosynthesis of normal levels of retinoate in the embryonic ocular and nasal regions; a critical lipid in the embryonic development of the eye and the nasal region. The polypeptide is Retinaldehyde dehydrogenase 3 (ALDH1A3) (Homo sapiens (Human)).